The following is a 346-amino-acid chain: Farnesyl diphosphate synthase 1 (346 aa).

Positions 52, 55, and 90 each coordinate isopentenyl diphosphate. Mg(2+) is bound by residues Asp97 and Asp101. Positions 97–101 (DDIMD) match the DDXXD motif motif. Residue Arg106 coordinates dimethylallyl diphosphate. Arg107 contacts isopentenyl diphosphate. 3 residues coordinate dimethylallyl diphosphate: Lys194, Thr195, and Gln233. The DDXXD motif motif lies at 236–240 (DDYLD). 2 residues coordinate dimethylallyl diphosphate: Lys250 and Lys259.

It belongs to the FPP/GGPP synthase family. Mg(2+) is required as a cofactor. It depends on Mn(2+) as a cofactor. In terms of tissue distribution, highly expressed in shoots.

It carries out the reaction isopentenyl diphosphate + (2E)-geranyl diphosphate = (2E,6E)-farnesyl diphosphate + diphosphate. The enzyme catalyses isopentenyl diphosphate + dimethylallyl diphosphate = (2E)-geranyl diphosphate + diphosphate. It functions in the pathway isoprenoid biosynthesis; farnesyl diphosphate biosynthesis; farnesyl diphosphate from geranyl diphosphate and isopentenyl diphosphate: step 1/1. It participates in isoprenoid biosynthesis; geranyl diphosphate biosynthesis; geranyl diphosphate from dimethylallyl diphosphate and isopentenyl diphosphate: step 1/1. Functionally, catalyzes the sequential condensation of isopentenyl pyrophosphate (IPP) with the allylic pyrophosphates, dimethylallyl pyrophosphate (DMAPP), and then with the resultant geranylpyrophosphate (GPP) to the ultimate product farnesyl pyrophosphate (FPP). Has a 4.5 time greater affinity for GPP versus DMAPP. The polypeptide is Farnesyl diphosphate synthase 1 (FDS-1) (Artemisia spiciformis (Spiked big sagebrush)).